The primary structure comprises 341 residues: MLRVAINGFGRIGRNVLRAVYESGKRDRIQVVAVNELAKPDAMAHLLQYDTSHGRFGKKISHDQQHIYVHHQNGEYDSIRILHLSEIPLLPWRDLGVDLVLDCTGVYGCQEDGQQHIDAGAKLVLFSHPGASDLDNTIIYGVNHETLTAEHKIVSNGSCTTNCIVPIIKVLDDAFGIDSGTITTIHSSMNDQQVIDAYHNDLRRTRAASQSIIPVDTKLHKGIERIFPKFSNKFEAISVRVPTVNVTAMDLSVTIKSNVKVNDVNQTIVNASQCTLRGIVDYTEAPLVSIDFNHDPHSAIVDGTQTRVSNGQLVKMLVWCDNEWGFANRMLDTALAMQATQ.

11-12 (RI) serves as a coordination point for NAD(+). Substrate contacts are provided by residues 158–160 (SCT), arginine 204, 217–218 (TK), and arginine 240. The active-site Nucleophile is cysteine 159. Asparagine 322 provides a ligand contact to NAD(+).

Belongs to the glyceraldehyde-3-phosphate dehydrogenase family. Epd subfamily. As to quaternary structure, homotetramer.

It localises to the cytoplasm. The enzyme catalyses D-erythrose 4-phosphate + NAD(+) + H2O = 4-phospho-D-erythronate + NADH + 2 H(+). The protein operates within cofactor biosynthesis; pyridoxine 5'-phosphate biosynthesis; pyridoxine 5'-phosphate from D-erythrose 4-phosphate: step 1/5. In terms of biological role, catalyzes the NAD-dependent conversion of D-erythrose 4-phosphate to 4-phosphoerythronate. The polypeptide is D-erythrose-4-phosphate dehydrogenase (Vibrio cholerae serotype O1 (strain ATCC 39541 / Classical Ogawa 395 / O395)).